The following is a 316-amino-acid chain: L-lactate dehydrogenase (316 aa).

NAD(+) contacts are provided by residues 13-15 (GMI), 34-36 (FDI), Tyr-67, and 79-83 (TAGFT). Residue Arg-95 participates in substrate binding. NAD(+) is bound by residues 125–127 (VTN), Leu-150, and Leu-154. 2 residues coordinate substrate: Arg-158 and His-182. His-182 contacts NAD(+). Residue His-182 is the Proton acceptor of the active site.

This sequence belongs to the LDH/MDH superfamily. LDH family. As to quaternary structure, homotetramer.

It catalyses the reaction (S)-lactate + NAD(+) = pyruvate + NADH + H(+). Its pathway is fermentation; pyruvate fermentation to lactate; (S)-lactate from pyruvate: step 1/1. This chain is L-lactate dehydrogenase, found in Plasmodium berghei.